Here is a 762-residue protein sequence, read N- to C-terminus: uncharacterized protein (762 aa).

An MCM domain is found at 334-542; sequence IIDILSNYLI…SDEEIAEHIL (209 aa). An ATP-binding site is contributed by 384-391; that stretch reads TDPGIGKS.

This sequence belongs to the MCM family.

This is an uncharacterized protein from Methanocaldococcus jannaschii (strain ATCC 43067 / DSM 2661 / JAL-1 / JCM 10045 / NBRC 100440) (Methanococcus jannaschii).